The primary structure comprises 72 residues: MLVYKMLWNKTILGMKSINTGNRKADTACAKLSKLVQLTNILINKEGIPFKLVGDTKRIVFRELDGDTTANK.

This is an uncharacterized protein from Dictyostelium discoideum (Social amoeba).